Here is a 119-residue protein sequence, read N- to C-terminus: Large ribosomal subunit protein uL18 (119 aa).

The tract at residues 1 to 26 is disordered; it reads MGQNDKAARRQKIKLRSKTRGQGTAA. Positions 9 to 19 are enriched in basic residues; sequence RRQKIKLRSKT.

This sequence belongs to the universal ribosomal protein uL18 family. In terms of assembly, part of the 50S ribosomal subunit; part of the 5S rRNA/L5/L18/L25 subcomplex. Contacts the 5S and 23S rRNAs.

Functionally, this is one of the proteins that bind and probably mediate the attachment of the 5S RNA into the large ribosomal subunit, where it forms part of the central protuberance. In Prosthecochloris aestuarii (strain DSM 271 / SK 413), this protein is Large ribosomal subunit protein uL18.